A 657-amino-acid chain; its full sequence is MRRSSDPSANKKKWTKASNWRPRMVRWQRQLARVNALESTLQAEDDQTIRKRSLALRYRAMAGEKLSELLPEAYALCREAGRRSLSMRHYDVQILGGIALFEGHITEMQTGEGKTLTATLPLYLHSLVGKGAHLATVNDYLAKRDAEWMMPLFEMLGVSVGIIQTEDDQGGRRKSYGAAITYGTAKEFGFDFLRDRLLLRAQNRMQTEMLGSGDGGFSNSGDQVVMRGMHFCLVDEADSILIDEARTPLIIGSIEDTVRDQIIETYKWAAENAPLFELDEHFEIDDETKRYELTARGRSKVRALPKSDLVRTMGLVDMYEYIERSIKTHREFLLDRQYVIRPSEKDPNVDEIVIVDEFTGRLAEGRKWRDGIHQSIEAKEGVEISVPTGQAARITVQDLFLRYPHLAGMTGTAATSAGELRKIYRTPVVRVPTNRPPQRIQLPSRVFGTLTSKFEAIAKEVEEIHATGRPVLVGTRSIDKSVLLSKLLDDLGIEHEVLNANNVEREAEIVAEAGGRGKVTVATNMAGRGTDIKLSNDVEQIGGMHVICTELHDAARIDRQLIGRCGRQGDRGSYRQYLSLDDDILKGGYGAIKYEKLKKRGEATSGSVDRLAAMFHKAQRKVERRHFRDRMVLMHHEKERKKMQREIGQDPYLDTPD.

ATP is bound by residues Gln93, 111 to 115, and Asp531; that span reads GEGKT.

The protein belongs to the SecA family. In terms of assembly, monomer and homodimer. Part of the essential Sec protein translocation apparatus which comprises SecA, SecYEG and auxiliary proteins SecDF. Other proteins may also be involved.

The protein localises to the cell inner membrane. It is found in the cytoplasm. The catalysed reaction is ATP + H2O + cellular proteinSide 1 = ADP + phosphate + cellular proteinSide 2.. Part of the Sec protein translocase complex. Interacts with the SecYEG preprotein conducting channel. Has a central role in coupling the hydrolysis of ATP to the transfer of proteins into and across the cell membrane, serving as an ATP-driven molecular motor driving the stepwise translocation of polypeptide chains across the membrane. The chain is Protein translocase subunit SecA 2 from Rhodopirellula baltica (strain DSM 10527 / NCIMB 13988 / SH1).